The primary structure comprises 1842 residues: Plexin-B2 (1842 aa).

A signal peptide spans 1–19; it reads MALPLWALTFLGLTGLGLS. In terms of domain architecture, Sema spans 20–468; the sequence is LRSRKPESFR…TQDKVFRLPV (449 aa). Topologically, residues 20–1201 are extracellular; sequence LRSRKPESFR…EYDTRASDVP (1182 aa). Cystine bridges form between C78–C87 and C112–C120. N-linked (GlcNAc...) asparagine glycosylation is found at N127 and N242. Intrachain disulfides connect C250–C366, C266–C313, and C331–C353. N393 and N451 each carry an N-linked (GlcNAc...) asparagine glycan. 5 disulfide bridges follow: C471–C488, C477–C520, C480–C497, C491–C503, and C557–C576. N798 is a glycosylation site (N-linked (GlcNAc...) asparagine). IPT/TIG domains follow at residues 806–895, 898–982, and 986–1095; these read PVIT…QFTY, PQPL…SFTY, and PMIR…VFEY. 3 N-linked (GlcNAc...) asparagine glycosylation sites follow: N919, N1053, and N1072. A helical membrane pass occupies residues 1202–1222; it reads LSLILPLVMVPMVFIIVVSIY. Topologically, residues 1223–1842 are cytoplasmic; the sequence is CYWRKSQQAE…AALENKVTDL (620 aa). Residues S1240, S1248, and S1574 each carry the phosphoserine modification.

The protein belongs to the plexin family. In terms of assembly, monomer, and heterodimer with PLXNB1. Interacts with MET, ARHGEF11 and ARHGEF12. May also interact with MST1R. As to expression, detected in macrophages from spleen and bone marrow (at protein level). Detected in granule cells in the developing cerebellum, dentate gyrus and olfactory bulb. Expressed in neurons and glia in the developing hippocampus.

It is found in the cell membrane. Functionally, cell surface receptor for SEMA4C, SEMA4D and SEMA4G that plays an important role in cell-cell signaling. Plays a role in glutamatergic synapse development and is required for SEMA4A-mediated excitatory synapse development. Binding to class 4 semaphorins promotes downstream activation of RHOA and phosphorylation of ERBB2 at 'Tyr-1248'. Also acts as a cell surface receptor for angiogenin (ANG); promoting ANG endocytosis and translocation to the cytoplasm or nucleus. Required for normal differentiation and migration of neuronal cells during brain corticogenesis and for normal embryonic brain development. Regulates the migration of cerebellar granule cells in the developing brain. Plays a role in RHOA activation and subsequent changes of the actin cytoskeleton. Plays a role in axon guidance, invasive growth and cell migration. May modulate the activity of RAC1 and CDC42. Down-regulates macrophage migration in wound-healing assays (in vitro). The sequence is that of Plexin-B2 from Mus musculus (Mouse).